Reading from the N-terminus, the 272-residue chain is Glutamate racemase (272 aa).

Residues 10–11 (DS) and 42–43 (YG) each bind substrate. The active-site Proton donor/acceptor is Cys74. 75–76 (NT) is a binding site for substrate. Catalysis depends on Cys185, which acts as the Proton donor/acceptor. 186-187 (TH) serves as a coordination point for substrate.

It belongs to the aspartate/glutamate racemases family.

It catalyses the reaction L-glutamate = D-glutamate. It participates in cell wall biogenesis; peptidoglycan biosynthesis. Functionally, provides the (R)-glutamate required for cell wall biosynthesis. This is Glutamate racemase from Bacillus velezensis (strain DSM 23117 / BGSC 10A6 / LMG 26770 / FZB42) (Bacillus amyloliquefaciens subsp. plantarum).